The primary structure comprises 1829 residues: Afadin (1829 aa).

Residues 39–133 form the Ras-associating 1 domain; that stretch reads FHGVMRFYFQ…GRFVLKNEND (95 aa). Residues 129-196 form a disordered region; sequence KNENDAIPAK…PSQGDDSENS (68 aa). Residues 146–186 are a coiled coil; sequence EKQEKEGVIQNFKRTLSKKEKKEKKKREKEALRQASDKEER. The span at 160 to 172 shows a compositional bias: basic residues; the sequence is TLSKKEKKEKKKR. The span at 173 to 189 shows a compositional bias: basic and acidic residues; it reads EKEALRQASDKEERPSQ. Phosphoserine occurs at positions 216, 246, and 256. Residues 246–348 form the Ras-associating 2 domain; it reads SGGTLRIYAD…LVFQLKRRPP (103 aa). Positions 356 to 371 are enriched in basic and acidic residues; it reads KKHVEGKPLKGKDRAD. The interval 356-377 is disordered; the sequence is KKHVEGKPLKGKDRADGSGYGS. 2 positions are modified to phosphoserine: Ser391 and Ser424. Residues 441-507 enclose the FHA domain; that stretch reads FGPGIQPHHC…KFVDPIQDHV (67 aa). Phosphoserine is present on residues Ser512, Ser557, Ser562, Ser589, and Ser655. A disordered region spans residues 539 to 595; that stretch reads DIHSGTALPASRSTTRLDSDRVSSASSTAERGMVKPMIRLDQEQDYRRRESRTQDAA. The span at 576 to 591 shows a compositional bias: basic and acidic residues; the sequence is IRLDQEQDYRRRESRT. The Dilute domain maps to 668 to 915; the sequence is NKMVSMMEGV…IENVVAVAEN (248 aa). One can recognise a PDZ domain in the interval 1014–1100; that stretch reads VITVTLKKQN…VVTLEVAKQG (87 aa). A phosphoserine mark is found at Ser1090, Ser1114, Ser1133, Ser1147, Ser1150, Ser1179, Ser1180, Ser1189, and Ser1206. The tract at residues 1114–1230 is disordered; the sequence is SPMMQRISDR…PRPEAYPIPT (117 aa). The span at 1120 to 1135 shows a compositional bias: basic and acidic residues; sequence ISDRRGSGKPRPKSEG. A compositionally biased stretch (polar residues) spans 1139 to 1150; the sequence is YNNSAQNGSPES. Positions 1159-1179 are enriched in basic and acidic residues; sequence SEPKKLPGDDRLMKNRADHRS. A compositionally biased stretch (polar residues) spans 1195–1217; that stretch reads PYTSGTAAKITSVSTGNLCTEEQ. A phosphothreonine mark is found at Thr1218 and Thr1239. A phosphoserine mark is found at Ser1245 and Ser1282. A compositionally biased stretch (basic and acidic residues) spans 1300 to 1309; that stretch reads ESGMDRKCDS. Disordered regions lie at residues 1300 to 1533 and 1574 to 1724; these read ESGM…EKQQ and RLQE…KTQV. Residues 1316-1325 show a composition bias toward low complexity; sequence SSSVESSTSS. The span at 1332–1344 shows a compositional bias: polar residues; the sequence is SSKSVTPASTLTK. Ser1335 is subject to Phosphoserine. A Phosphothreonine modification is found at Thr1337. Pro residues predominate over residues 1371–1380; the sequence is LPPPPPPPPA. Residues 1401–1412 are compositionally biased toward low complexity; it reads NQAAPQSAQVAA. The span at 1413-1447 shows a compositional bias: basic and acidic residues; sequence AERKKREEHQRWYEKEKARLEEERERKRREQERKL. A coiled-coil region spans residues 1417-1454; the sequence is KREEHQRWYEKEKARLEEERERKRREQERKLGQMRTQS. The span at 1450–1464 shows a compositional bias: polar residues; that stretch reads MRTQSLNPASFSPLA. The segment covering 1494-1510 has biased composition (basic and acidic residues); sequence TIERRDLQYITISKEEL. Ser1506 and Ser1517 each carry phosphoserine. A compositionally biased stretch (basic and acidic residues) spans 1520-1533; the sequence is PWKRDAREKLEKQQ. A coiled-coil region spans residues 1530–1564; the sequence is EKQQQMHIVDMLSKEIHELQNKGDRTAEESDRLRK. The segment covering 1583–1594 has biased composition (acidic residues); the sequence is EDDDEEEDDDVD. Residues 1600–1672 adopt a coiled-coil conformation; it reads QRLEAERRAR…SRLEAERRRQ (73 aa). The segment covering 1602–1682 has biased composition (basic and acidic residues); sequence LEAERRARLQ…HEEAARRLLE (81 aa). A Phosphoserine modification is found at Ser1701. Polar residues predominate over residues 1715 to 1724; it reads RNASYLKTQV. Position 1726 is a phosphoserine (Ser1726). A disordered region spans residues 1742-1829; sequence DEEENYVPAG…TELENELNTK (88 aa). Positions 1753 to 1764 are enriched in polar residues; sequence NSYSGSAGTTAG. Residues 1768–1781 show a composition bias toward basic and acidic residues; that stretch reads APRDTREKLSRSQD. A phosphoserine mark is found at Ser1779 and Ser1804. The segment covering 1809–1829 has biased composition (basic and acidic residues); the sequence is VSDKVKASRKLTELENELNTK. The residue at position 1812 (Lys1812) is an N6-acetyllysine.

As to quaternary structure, homodimer. Interacts with F-actin, nectin and NECTIN3. Essential for the association of nectin and E-cadherin. Isoform 2/s-afadin does not interact with F-actin. Interacts with ZO-1 and occludin, but probably in an indirect manner. Interacts with RIT1, RIT2, NRXN1 and BCR. Interacts with ADAM10; the interaction locks ADAM10 at adherens junctions following ADAM10 recruitment to adherens junctions by TSPAN33. As to expression, isoform 1 is widely expressed, including in heart, brain, spleen, lung, liver, skeletal muscle, kidney and testis. Isoform 2 is mainly expressed in the brain.

Its subcellular location is the cell junction. The protein localises to the adherens junction. Its function is as follows. Belongs to an adhesion system, probably together with the E-cadherin-catenin system, which plays a role in the organization of homotypic, interneuronal and heterotypic cell-cell adherens junctions (AJs). Nectin- and actin-filament-binding protein that connects nectin to the actin cytoskeleton. May play a key role in the organization of epithelial structures of the embryonic ectoderm. Essential for the organization of adherens junctions. In Rattus norvegicus (Rat), this protein is Afadin.